The sequence spans 778 residues: Preasperterpenoid A synthase PvPS (778 aa).

The segment at 1–414 is terpene cyclase; the sequence is MAATKKSTAT…HRYNFHKPAA (414 aa). Aspartate 176 and aspartate 180 together coordinate Mg(2+). Residue aspartate 176 coordinates substrate. Residues 176–180 carry the DDXXD 1 motif; sequence DDILD. Substrate contacts are provided by residues 266–269, asparagine 310, 314–318, and 406–407; these read RVIN, SWEKE, and RY. The NSE/DTE signature appears at 310–318; sequence NDYFSWEKE. Positions 414-431 are enriched in basic and acidic residues; sequence AKENEDTDDEGAKSDDSK. Positions 415-778 are prenyltransferase; that stretch reads KENEDTDDEG…LRLLLKRLQV (364 aa). A disordered region spans residues 416–454; sequence ENEDTDDEGAKSDDSKTTLNDSTDSTVVDVKTPATSGLL. Lysine 499, arginine 502, and histidine 531 together coordinate isopentenyl diphosphate. Residues aspartate 538 and aspartate 542 each coordinate Mg(2+). The DDXXD 2 signature appears at 538–542; sequence DDIED. Position 547 (arginine 547) interacts with dimethylallyl diphosphate. Arginine 548 is an isopentenyl diphosphate binding site. Lysine 625, threonine 626, glutamine 662, asparagine 669, lysine 679, and lysine 689 together coordinate dimethylallyl diphosphate.

It in the N-terminal section; belongs to the terpene synthase family. In the C-terminal section; belongs to the FPP/GGPP synthase family. As to quaternary structure, hexamer. The cofactor is Mg(2+).

The enzyme catalyses isopentenyl diphosphate + (2E,6E)-farnesyl diphosphate = (2E,6E,10E)-geranylgeranyl diphosphate + diphosphate. It carries out the reaction isopentenyl diphosphate + (2E,6E,10E)-geranylgeranyl diphosphate = (2E,6E,10E,14E)-geranylfarnesyl diphosphate + diphosphate. The catalysed reaction is (2E,6E,10E,14E)-geranylfarnesyl diphosphate = preasperterpenoid A + diphosphate. It functions in the pathway secondary metabolite biosynthesis; terpenoid biosynthesis. Its function is as follows. Bifunctional sesterterpene synthase that possesses both prenyl transferase and terpene cyclase activity, converting isopentenyl diphosphate and dimethylallyl diphosphate into geranylfarnesyl diphosphate (GFPP) and further converting GFPP into preasperterpenoid A. In Talaromyces verruculosus (Penicillium verruculosum), this protein is Preasperterpenoid A synthase PvPS.